Consider the following 246-residue polypeptide: Mediator of RNA polymerase II transcription subunit 6 (246 aa).

2 disordered regions span residues 165 to 186 (MKKKEEEKKEEDERKLEERSTN) and 207 to 246 (EALEKLDVKEEENPKPEEAPSASAVGEPKFAEPAARATTK). 2 stretches are compositionally biased toward basic and acidic residues: residues 166–184 (KKKEEEKKEEDERKLEERS) and 208–224 (ALEKLDVKEEENPKPEE).

This sequence belongs to the Mediator complex subunit 6 family. As to quaternary structure, component of the Mediator complex. Interacts with let-19/mdt-13. Interacts with RNA polymerase II. Interacts with mdt-28.

It localises to the nucleus. In terms of biological role, component of the Mediator complex, a coactivator involved in the regulated transcription of nearly all RNA polymerase II-dependent genes. Mediator functions as a bridge to convey information from gene-specific regulatory proteins to the basal RNA polymerase II transcription machinery. Mediator is recruited to promoters by direct interactions with regulatory proteins and serves as a scaffold for the assembly of a functional preinitiation complex with RNA polymerase II and the general transcription factors. This chain is Mediator of RNA polymerase II transcription subunit 6 (mdt-6), found in Caenorhabditis briggsae.